Here is a 699-residue protein sequence, read N- to C-terminus: MATAREIPLNRTRNIGIMAHIDAGKTTTTERVLYYTGVSHKMGEVHEGSAVMDWMEQEQERGITITSAATTCYWLGMDQQYPKHRINIIDTPGHVDFTIEVERSLRVLDGAVAVFCSVGGVEPQSETVWRQANRYHVPRLGFVNKMDRAGANFLRVVNQVKDRLNANPIPIQLPIGAEEDFKGVIDLIRKKAIYWNEADRGRTYELADIPEDMKAEVQKWREKMIEAAAESSEELMDRYLEAGDLSPEQIRQGLRQRTLANEIVPILCGSAFKNKGVQALLDAVIDYLPSPTDVPAIRGEEDDGSEGSRSASDDEPFAALAFKIASDPFVGTLTFFRVYSGILKSGDSVYNPIKGKKERIGRLLQMHSNSREEIKEVRAGDIAAAVGLKTVTTGDTICNQQNIITLEKMDFPEPVISVAIEPKTKADQEKMGVALGKLAQEDPSFRVHTDEESAQTIIEGMGELHLEIIVDRMRREFNVEANVGKPRVAYRETIRRSVEQQGKYIRQTGGRGQYGDVWLRIEPREPGAGFEFENAIVGGVVPREYIPAVEKGVREQMENGIRAGYPVVDVKVTIFEGSYHDVDSSEMAFKIAGSMAFKEGASKADPVLLEPIMKVEVVTPEEYMGDVVGDLNRRRGMIQGMDESPAGKIVDVEVPLAEMFGYATDLRSLSQGRATYTMEFLKYAEAPSNIAEAIIKQQS.

A tr-type G domain is found at 10-292 (NRTRNIGIMA…AVIDYLPSPT (283 aa)). GTP contacts are provided by residues 19–26 (AHIDAGKT), 90–94 (DTPGH), and 144–147 (NKMD). The disordered stretch occupies residues 292–312 (TDVPAIRGEEDDGSEGSRSAS).

This sequence belongs to the TRAFAC class translation factor GTPase superfamily. Classic translation factor GTPase family. EF-G/EF-2 subfamily.

It localises to the cytoplasm. Catalyzes the GTP-dependent ribosomal translocation step during translation elongation. During this step, the ribosome changes from the pre-translocational (PRE) to the post-translocational (POST) state as the newly formed A-site-bound peptidyl-tRNA and P-site-bound deacylated tRNA move to the P and E sites, respectively. Catalyzes the coordinated movement of the two tRNA molecules, the mRNA and conformational changes in the ribosome. The chain is Elongation factor G from Coxiella burnetii (strain CbuG_Q212) (Coxiella burnetii (strain Q212)).